A 224-amino-acid polypeptide reads, in one-letter code: Urease accessory protein UreF (224 aa).

Belongs to the UreF family. In terms of assembly, ureD, UreF and UreG form a complex that acts as a GTP-hydrolysis-dependent molecular chaperone, activating the urease apoprotein by helping to assemble the nickel containing metallocenter of UreC. The UreE protein probably delivers the nickel.

The protein localises to the cytoplasm. Its function is as follows. Required for maturation of urease via the functional incorporation of the urease nickel metallocenter. The polypeptide is Urease accessory protein UreF (Azotobacter vinelandii (strain DJ / ATCC BAA-1303)).